The primary structure comprises 926 residues: Beta-mannosidase A (926 aa).

An N-terminal signal peptide occupies residues 1 to 21 (MHVKAETVLALLTPAPPSVVG). N-linked (GlcNAc...) asparagine glycosylation is found at N40, N242, N277, N311, and N342. Residue E474 is the Proton donor of the active site. N532, N603, N626, N653, N733, N756, N785, N793, N819, and N905 each carry an N-linked (GlcNAc...) asparagine glycan.

It belongs to the glycosyl hydrolase 2 family. Beta-mannosidase A subfamily. Homodimer.

The protein resides in the secreted. The enzyme catalyses Hydrolysis of terminal, non-reducing beta-D-mannose residues in beta-D-mannosides.. It participates in glycan metabolism; N-glycan degradation. Its function is as follows. Exoglycosidase that cleaves the single beta-linked mannose residue from the non-reducing end of beta-mannosidic oligosaccharides of various complexity and length. Involved in the degradation of polymeric mannan and galactomannan. The polypeptide is Beta-mannosidase A (mndA) (Aspergillus fumigatus (strain CBS 144.89 / FGSC A1163 / CEA10) (Neosartorya fumigata)).